A 202-amino-acid polypeptide reads, in one-letter code: Large ribosomal subunit protein bL9 (202 aa).

The interval 168–202 (DEAGFTEDYDPNAEPGEIPTELQDEAPAAEATDEA) is disordered. A compositionally biased stretch (low complexity) spans 192-202 (EAPAAEATDEA).

It belongs to the bacterial ribosomal protein bL9 family.

Binds to the 23S rRNA. The polypeptide is Large ribosomal subunit protein bL9 (Rhizorhabdus wittichii (strain DSM 6014 / CCUG 31198 / JCM 15750 / NBRC 105917 / EY 4224 / RW1) (Sphingomonas wittichii)).